The sequence spans 373 residues: Indole glucosinolate O-methyltransferase 2 (373 aa).

S-adenosyl-L-homocysteine-binding residues include glycine 217, aspartate 240, aspartate 260, methionine 261, and lysine 274. Histidine 278 (proton acceptor) is an active-site residue.

The protein belongs to the class I-like SAM-binding methyltransferase superfamily. Cation-independent O-methyltransferase family.

It participates in secondary metabolite biosynthesis. Involved in indole glucosinolate biosynthesis. Catalyzes methoxylation reactions of the glucosinolate indole ring. Converts the hydroxy intermediates 4-hydroxy-indol-3-yl-methylglucosinolate (4OH-I3M) and 1-hydroxy-indol-3-yl-methylglucosinolate (1OH-I3M) to 4-methoxy-indol-3-yl-methylglucosinolate (4MO-I3M) and 1-methoxy-indol-3-yl-methylglucosinolate (1MO-I3M), respectively. This is Indole glucosinolate O-methyltransferase 2 from Arabidopsis thaliana (Mouse-ear cress).